The sequence spans 132 residues: MTMTDPVADMLTRLRNANSAYHDSVSMPYSKLKARVADILKAEGFIAGWKEEDAEVGKKLTLDLKFGPNRERSIAGVRRISKPGLRVYAKSTNLPHVLGGLGIAILSTSSGLLTDKQAGKKGVGGEVLAYVW.

Belongs to the universal ribosomal protein uS8 family. Part of the 30S ribosomal subunit. Contacts proteins S5 and S12.

In terms of biological role, one of the primary rRNA binding proteins, it binds directly to 16S rRNA central domain where it helps coordinate assembly of the platform of the 30S subunit. In Pseudarthrobacter chlorophenolicus (strain ATCC 700700 / DSM 12829 / CIP 107037 / JCM 12360 / KCTC 9906 / NCIMB 13794 / A6) (Arthrobacter chlorophenolicus), this protein is Small ribosomal subunit protein uS8.